Here is a 387-residue protein sequence, read N- to C-terminus: Protein TsgA homolog (387 aa).

12 consecutive transmembrane segments (helical) span residues 11 to 31 (WISF…GMIM), 47 to 67 (NIFT…SWLI), 76 to 96 (LIFG…STSI), 101 to 121 (INIF…TFII), 134 to 154 (LLLT…ISAY), 160 to 180 (ILWY…FILT), 205 to 225 (IILL…FISW), 243 to 263 (VLVS…SFII), 271 to 291 (MFIF…YSKS), 299 to 319 (IISL…LASL), 331 to 351 (LILF…SPIV), and 358 to 378 (TTLI…CIIF).

The protein belongs to the major facilitator superfamily. TsgA family.

The protein resides in the cell membrane. This is Protein TsgA homolog from Buchnera aphidicola subsp. Schizaphis graminum (strain Sg).